Here is a 236-residue protein sequence, read N- to C-terminus: uncharacterized protein (236 aa).

Residues Q4 to Y236 form the GP-PDE domain.

It to glycerophosphoryl diester phosphodiesterases (EC 3.1.4.46). This sequence to M.genitalium MG293.

This is an uncharacterized protein from Mycoplasma genitalium (strain ATCC 33530 / DSM 19775 / NCTC 10195 / G37) (Mycoplasmoides genitalium).